Consider the following 291-residue polypeptide: Ribosomal RNA small subunit methyltransferase A (291 aa).

Residues H37, L39, G64, E85, D110, and N131 each coordinate S-adenosyl-L-methionine.

Belongs to the class I-like SAM-binding methyltransferase superfamily. rRNA adenine N(6)-methyltransferase family. RsmA subfamily.

It is found in the cytoplasm. It catalyses the reaction adenosine(1518)/adenosine(1519) in 16S rRNA + 4 S-adenosyl-L-methionine = N(6)-dimethyladenosine(1518)/N(6)-dimethyladenosine(1519) in 16S rRNA + 4 S-adenosyl-L-homocysteine + 4 H(+). Its function is as follows. Specifically dimethylates two adjacent adenosines (A1518 and A1519) in the loop of a conserved hairpin near the 3'-end of 16S rRNA in the 30S particle. May play a critical role in biogenesis of 30S subunits. This chain is Ribosomal RNA small subunit methyltransferase A, found in Dehalococcoides mccartyi (strain ATCC BAA-2100 / JCM 16839 / KCTC 5957 / BAV1).